The following is a 209-amino-acid chain: uncharacterized protein (209 aa).

Disordered regions lie at residues methionine 1 to glutamate 80 and leucine 164 to glutamate 197. Residues serine 178–arginine 189 are compositionally biased toward low complexity.

This is an uncharacterized protein from Homo sapiens (Human).